The sequence spans 295 residues: MRRLEGSMVAIVTPMKDGAVDLRALRELTEWQLAEGTDGIVPCGTTGEGVTLTPAERADVIRTVIETVRGRALVIAGAGSNATHEAIESVKLAKSLGADAALVVTPYYNKPTQEGLFRHYQAIWEATRFPVVAYNVPSRTSVDLLPETVARLAKAGAIAGIKEATANMDRQVQLVEKVGKDAIAYLSGDDFTVLPYIACGGHGVISVIANVAPRAMKELVVAARSGDLAGALAKQAAMAELNRMMFVETNPGPVKAAVALLGRAGGELRLPLAPVSEASLAKVREAMVRFGLKLA.

Pyruvate is bound at residue T46. Y134 (proton donor/acceptor) is an active-site residue. K162 functions as the Schiff-base intermediate with substrate in the catalytic mechanism. I205 contacts pyruvate.

Belongs to the DapA family. Homotetramer; dimer of dimers.

Its subcellular location is the cytoplasm. The enzyme catalyses L-aspartate 4-semialdehyde + pyruvate = (2S,4S)-4-hydroxy-2,3,4,5-tetrahydrodipicolinate + H2O + H(+). It functions in the pathway amino-acid biosynthesis; L-lysine biosynthesis via DAP pathway; (S)-tetrahydrodipicolinate from L-aspartate: step 3/4. Catalyzes the condensation of (S)-aspartate-beta-semialdehyde [(S)-ASA] and pyruvate to 4-hydroxy-tetrahydrodipicolinate (HTPA). This is 4-hydroxy-tetrahydrodipicolinate synthase from Anaeromyxobacter dehalogenans (strain 2CP-C).